Consider the following 607-residue polypeptide: Heterocyst differentiation ATP-binding protein HepA (607 aa).

The 299-residue stretch at 32-330 folds into the ABC transmembrane type-1 domain; that stretch reads AILAVIFSFL…INGTVAFLST (299 aa). Helical transmembrane passes span 33–53, 77–97, 163–182, 186–208, and 290–310; these read ILAV…IGFL, ILAA…LILL, FSGL…YFVV, ISWQ…LSTL, and IVIS…FFFV. Positions 364-598 constitute an ABC transporter domain; sequence IDLVSVDFGY…RGKLWKYHQM (235 aa). 397–404 is an ATP binding site; sequence GASGAGKT.

It belongs to the ABC transporter superfamily.

It localises to the cell inner membrane. In terms of biological role, acts early in the process of morphological differentiation of heterocysts. This is Heterocyst differentiation ATP-binding protein HepA (hepA) from Nostoc sp. (strain PCC 7120 / SAG 25.82 / UTEX 2576).